A 119-amino-acid chain; its full sequence is Large ribosomal subunit protein bL20 (119 aa).

Belongs to the bacterial ribosomal protein bL20 family.

Its function is as follows. Binds directly to 23S ribosomal RNA and is necessary for the in vitro assembly process of the 50S ribosomal subunit. It is not involved in the protein synthesizing functions of that subunit. In Streptococcus suis (strain 98HAH33), this protein is Large ribosomal subunit protein bL20.